We begin with the raw amino-acid sequence, 126 residues long: Histone H2B-alpha (126 aa).

A disordered region spans residues M1 to K34. An N6-acetyllysine; alternate mark is found at K6 and K7. Glycyl lysine isopeptide (Lys-Gly) (interchain with G-Cter in SUMO); alternate cross-links involve residues K6 and K7. S10 carries the post-translational modification Phosphoserine. At K11 the chain carries N6-acetyllysine. Positions A17–K27 are enriched in basic and acidic residues. A Glycyl lysine isopeptide (Lys-Gly) (interchain with G-Cter in ubiquitin) cross-link involves residue K120.

Belongs to the histone H2B family. The nucleosome is a histone octamer containing two molecules each of H2A, H2B, H3 and H4 assembled in one H3-H4 heterotetramer and two H2A-H2B heterodimers. The octamer wraps approximately 147 bp of DNA. Interacts with rik1. Post-translationally, monoubiquitinated by the rhp6/ubc2-bre1 complex to form H2BK123ub1. H2BK123ub1 gives a specific tag for epigenetic transcriptional activation and is also prerequisite for H3K4me and H3K79me formation. H2BK123ub1 also modulates the formation of double-strand breaks during meiosis and is a prerequisite for DNA-damage checkpoint activation. Phosphorylated by shk1 to form H2BS10ph during progression through meiotic prophase. May be correlated with chromosome condensation. In terms of processing, acetylation of N-terminal lysines and particularly formation of H2BK11ac has a positive effect on transcription. Post-translationally, sumoylation to form H2BK6su or H2BK7su occurs preferentially near the telomeres and represses gene transcription.

Its subcellular location is the nucleus. The protein resides in the chromosome. Core component of nucleosome. Nucleosomes wrap and compact DNA into chromatin, limiting DNA accessibility to the cellular machineries which require DNA as a template. Histones thereby play a central role in transcription regulation, DNA repair, DNA replication and chromosomal stability. DNA accessibility is regulated via a complex set of post-translational modifications of histones, also called histone code, and nucleosome remodeling. This Schizosaccharomyces pombe (strain 972 / ATCC 24843) (Fission yeast) protein is Histone H2B-alpha (htb1).